A 516-amino-acid chain; its full sequence is GMP synthase [glutamine-hydrolyzing] (516 aa).

Residues 8-198 (KILILDFGSQ…VVNICGCDTL (191 aa)) form the Glutamine amidotransferase type-1 domain. Cys-84 (nucleophile) is an active-site residue. Active-site residues include His-172 and Glu-174. The GMPS ATP-PPase domain maps to 199-391 (WNIENIIEND…LGLPYNMLYR (193 aa)). 226 to 232 (SGGVDSS) serves as a coordination point for ATP.

Homodimer.

The enzyme catalyses XMP + L-glutamine + ATP + H2O = GMP + L-glutamate + AMP + diphosphate + 2 H(+). Its pathway is purine metabolism; GMP biosynthesis; GMP from XMP (L-Gln route): step 1/1. Functionally, catalyzes the synthesis of GMP from XMP. In Francisella tularensis subsp. tularensis (strain WY96-3418), this protein is GMP synthase [glutamine-hydrolyzing].